Consider the following 576-residue polypeptide: Interleukin-1 receptor type 1 (576 aa).

The first 19 residues, 1-19 (MENMKVLLGFICLIVPLLS), serve as a signal peptide directing secretion. Ig-like C2-type domains lie at 20–115 (LETD…ITMS), 121–217 (PGLC…RVIT), and 229–331 (PVIM…VRLV). The Extracellular portion of the chain corresponds to 20–338 (LETDKCTEYP…RLVYPVPDFK (319 aa)). Disulfide bonds link cysteine 25/cysteine 107, cysteine 46/cysteine 99, and cysteine 145/cysteine 199. N-linked (GlcNAc...) asparagine glycosylation is found at asparagine 63 and asparagine 103. Residues asparagine 236, asparagine 252, and asparagine 266 are each glycosylated (N-linked (GlcNAc...) asparagine). Cysteine 251 and cysteine 315 are joined by a disulfide. A helical membrane pass occupies residues 339–359 (NYLIGGFAIFTATAVFCACIY). The Cytoplasmic segment spans residues 360 to 576 (KVFKVDIVLW…LQAETHLPLG (217 aa)). The TIR domain maps to 386-541 (RTYDAYVLYP…RFWKNLRYQM (156 aa)). Glutamate 473 is a catalytic residue. Position 499 is a phosphotyrosine (tyrosine 499). At threonine 556 the chain carries Phosphothreonine; by PKC.

Belongs to the interleukin-1 receptor family. The interleukin-1 receptor complex is a heterodimer of IL1R1 and IL1RAP. Interacts with PIK3R1. Interacts with IL1A. A soluble form (sIL1R1) is probably produced by proteolytic cleavage at the cell surface (shedding). In terms of processing, rapidly phosphorylated on Tyr-499 in response to IL-1, which creates a SH2 binding site for the PI 3-kinase regulatory subunit PIK3R1.

The protein resides in the membrane. Its subcellular location is the cell membrane. The protein localises to the secreted. The enzyme catalyses NAD(+) + H2O = ADP-D-ribose + nicotinamide + H(+). Functionally, receptor for IL1A, IL1B and IL1RN. After binding to interleukin-1 associates with the coreceptor IL1RAP to form the high affinity interleukin-1 receptor complex which mediates interleukin-1-dependent activation of NF-kappa-B, MAPK and other pathways. Signaling involves the recruitment of adapter molecules such as TOLLIP, MYD88, and IRAK1 or IRAK2 via the respective TIR domains of the receptor/coreceptor subunits. Binds ligands with comparable affinity and binding of antagonist IL1RN prevents association with IL1RAP to form a signaling complex. Involved in IL1B-mediated costimulation of IFNG production from T-helper 1 (Th1) cells. The polypeptide is Interleukin-1 receptor type 1 (Il1r1) (Rattus norvegicus (Rat)).